The following is a 115-amino-acid chain: MLSRIQNYTSGLVSKANLLSSKALYYGKVGAEISKQIYLKEGLQPPTVAQFKSVYSNLYKQSLNFALKPTEVLSCLKNIQKNELLKYGAYGIQLIGFYSVGEIIGRRKLVGYKHH.

At methionine 1 the chain carries N-acetylmethionine. Serine 3 and serine 62 each carry phosphoserine.

This sequence belongs to the ATPase g subunit family. In terms of assembly, F-type ATPases have 2 components, CF(1) - the catalytic core - and CF(0) - the membrane proton channel. In yeast, the dimeric form of ATP synthase consists of 17 polypeptides: alpha, beta, gamma, delta, epsilon, 4 (B), 5 (OSCP), 6 (A), 8, 9 (C), d, E (Tim11), f, g, h, i/j and k. Phosphorylation on Ser-62 impairs ATP synthase dimerization.

Its subcellular location is the mitochondrion membrane. Functionally, mitochondrial membrane ATP synthase (F(1)F(0) ATP synthase or Complex V) produces ATP from ADP in the presence of a proton gradient across the membrane which is generated by electron transport complexes of the respiratory chain. F-type ATPases consist of two structural domains, F(1) - containing the extramembraneous catalytic core, and F(0) - containing the membrane proton channel, linked together by a central stalk and a peripheral stalk. During catalysis, ATP synthesis in the catalytic domain of F(1) is coupled via a rotary mechanism of the central stalk subunits to proton translocation. Part of the complex F(0) domain. Minor subunit located with subunit a in the membrane. This Saccharomyces cerevisiae (strain ATCC 204508 / S288c) (Baker's yeast) protein is ATP synthase subunit g, mitochondrial (ATP20).